Reading from the N-terminus, the 171-residue chain is uncharacterized protein (171 aa).

2 disordered regions span residues 1 to 41 (MDAV…SKPK) and 114 to 147 (DSLG…RPKR). Residues 27–38 (AQQQQGPSAQGS) are compositionally biased toward low complexity. Polar residues predominate over residues 116 to 125 (LGNTASSSSM).

This is an uncharacterized protein from Mus musculus (Mouse).